The chain runs to 78 residues: Large ribosomal subunit protein bL28 (78 aa).

The protein belongs to the bacterial ribosomal protein bL28 family.

This Synechococcus sp. (strain CC9311) protein is Large ribosomal subunit protein bL28.